The sequence spans 390 residues: Chalcone synthase (390 aa).

Residue cysteine 164 is part of the active site.

This sequence belongs to the thiolase-like superfamily. Chalcone/stilbene synthases family.

It carries out the reaction (E)-4-coumaroyl-CoA + 3 malonyl-CoA + 3 H(+) = 2',4,4',6'-tetrahydroxychalcone + 3 CO2 + 4 CoA. It participates in secondary metabolite biosynthesis; flavonoid biosynthesis. Functionally, the primary product of this enzyme is 4,2',4',6'-tetrahydroxychalcone (also termed naringenin-chalcone or chalcone) which can under specific conditions spontaneously isomerize into naringenin. In Antirrhinum majus (Garden snapdragon), this protein is Chalcone synthase (CHS).